The sequence spans 348 residues: Putative zinc metalloprotease HP_0258 (348 aa).

H16 provides a ligand contact to Zn(2+). E17 is a catalytic residue. H20 serves as a coordination point for Zn(2+). The next 5 membrane-spanning stretches (helical) occupy residues 43 to 63, 93 to 113, 247 to 267, 275 to 295, and 324 to 344; these read CFFK…GGYV, WILF…YFFL, LIMG…VGAL, MLLL…LLPI, and LWLA…FNDL. In terms of domain architecture, PDZ spans 106 to 175; it reads AILVYFFLAL…GELVLEIERN (70 aa).

It belongs to the peptidase M50B family. It depends on Zn(2+) as a cofactor.

It localises to the cell inner membrane. This Helicobacter pylori (strain ATCC 700392 / 26695) (Campylobacter pylori) protein is Putative zinc metalloprotease HP_0258.